The following is an 874-amino-acid chain: Putative disease resistance protein At5g05400 (874 aa).

A coiled-coil region spans residues 22–74 (LSRNQNRFRNLVDHVAALKKTVRQLEARRDDLLKRIKVQEDRGLNLLDEVQQW). Residues 139–434 (AQKGPIPKVE…GQGIILGSKG (296 aa)) form the NB-ARC domain. 182-189 (GMGGVGKT) serves as a coordination point for ATP. 7 LRR repeats span residues 483 to 505 (QKNV…EDQK), 506 to 527 (AVRR…LHCP), 528 to 548 (KLET…EFLS), 552 to 574 (ILMV…SPLY), 575 to 597 (SLRF…YALR), 598 to 620 (NLLY…HDLP), and 621 to 642 (NLEV…VRQI).

This sequence belongs to the disease resistance NB-LRR family.

Potential disease resistance protein. The protein is Putative disease resistance protein At5g05400 of Arabidopsis thaliana (Mouse-ear cress).